We begin with the raw amino-acid sequence, 105 residues long: Large ribosomal subunit protein uL18c (105 aa).

This sequence belongs to the universal ribosomal protein uL18 family. Part of the 50S ribosomal subunit; contacts the 5S rRNA.

It is found in the plastid. Its subcellular location is the chloroplast. In terms of biological role, binds 5S rRNA, forms part of the central protuberance of the 50S subunit. This is Large ribosomal subunit protein uL18c (rpl18) from Cyanidium caldarium (Red alga).